A 217-amino-acid polypeptide reads, in one-letter code: Cytidylate kinase (217 aa).

10–18 (GPAGAGKST) provides a ligand contact to ATP.

The protein belongs to the cytidylate kinase family. Type 1 subfamily.

It localises to the cytoplasm. It carries out the reaction CMP + ATP = CDP + ADP. The catalysed reaction is dCMP + ATP = dCDP + ADP. In Clostridium botulinum (strain Loch Maree / Type A3), this protein is Cytidylate kinase.